A 425-amino-acid chain; its full sequence is SrfA-induced gene G protein (425 aa).

Residues Asn-25, Asn-28, and Asn-36 are each glycosylated (N-linked (GlcNAc...) asparagine). Coiled-coil stretches lie at residues 41 to 91 (RDSE…RIRN), 172 to 208 (HEKQ…MKRT), and 292 to 340 (KFGQ…NYNI). The helical transmembrane segment at 91–113 (NVFKVLITILVGSIIYGTYTNQF) threads the bilayer. The segment at 393 to 413 (KKPHADSNGHPKPYPHHHLLN) is disordered.

The protein resides in the membrane. In Dictyostelium discoideum (Social amoeba), this protein is SrfA-induced gene G protein (sigG).